The primary structure comprises 1285 residues: Dermonecrotic toxin (1285 aa).

The helical transmembrane segment at 402-422 (MLVPAVGIPINFALSATALGL) threads the bilayer.

It localises to the cytoplasm. The protein resides in the secreted. The protein localises to the host membrane. Its function is as follows. This is a dermonecrotic toxin. This osteolytic toxin, induces bone resorption. Potent mitogen. This toxin is associated with the severe progressive form of the atrophic rhinitis, a major respiratory disease in pigs. In Pasteurella multocida, this protein is Dermonecrotic toxin (toxA).